The primary structure comprises 425 residues: Protein translocase subunit SecY (425 aa).

10 consecutive transmembrane segments (helical) span residues 15–35 (LLSL…VPGI), 62–82 (TVVV…SIIM), 113–131 (LLTL…FYLK), 139–159 (LVLA…VLWL), 168–188 (LGNG…PGFV), 201–221 (IGSW…IVLL), 266–286 (PIIL…LGLL), 304–324 (IIYW…YSTI), 364–384 (LLGA…QAIL), and 385–405 (SLSG…GVIL).

Belongs to the SecY/SEC61-alpha family. Component of the plastid Sec protein translocase complex, which is composed of at least SecY, SecE and SecG.

The protein localises to the plastid. The protein resides in the chloroplast thylakoid membrane. In terms of biological role, the central subunit of the protein translocation channel SecYE. Consists of two halves formed by TMs 1-5 and 6-10. These two domains form a lateral gate at the front which open onto the bilayer between TMs 2 and 7, and are clamped together by SecE at the back. The channel is closed by both a pore ring composed of hydrophobic SecY resides and a short helix (helix 2A) on the extracellular side of the membrane which forms a plug. This chain is Protein translocase subunit SecY, found in Trieres chinensis (Marine centric diatom).